A 754-amino-acid chain; its full sequence is Pentatricopeptide repeat-containing protein At3g53700, chloroplastic (754 aa).

Residues 1 to 72 (MAFSSCLKFY…DSAALRLFNL (72 aa)) constitute a chloroplast transit peptide. 17 PPR repeats span residues 82–116 (EPAL…RCEM), 117–152 (GTST…GLKP), 153–187 (DTHF…GIKP), 188–222 (DVST…GLVP), 223–257 (DEKT…GCSW), 258–288 (SNVS…MSNQ), 294–328 (DQYT…GYDP), 329–363 (DVYT…DCSP), 364–398 (NTVT…GILP), 399–433 (DVCT…GCEP), 434–468 (DEFT…GCAR), 469–503 (SVIT…GVSR), 504–538 (NSVT…GQKP), 539–573 (DKYT…GCEP), 574–608 (DIVT…GINL), 609–643 (TPHA…NEAP), and 645–680 (DAVS…GFVP).

It belongs to the PPR family. P subfamily.

The protein localises to the plastid. The protein resides in the chloroplast. Functionally, may be involved in female gametophyte development. The chain is Pentatricopeptide repeat-containing protein At3g53700, chloroplastic (MEE40) from Arabidopsis thaliana (Mouse-ear cress).